We begin with the raw amino-acid sequence, 448 residues long: Death-associated protein kinase 3 (448 aa).

The 263-residue stretch at 13–275 (YEMGEELGSG…IAQSLEHSWI (263 aa)) folds into the Protein kinase domain. ATP is bound by residues 19–27 (LGSGQFAIV) and Lys-42. The active-site Proton acceptor is the Asp-139. An activation segment region spans residues 161–204 (DFGIAHRIEAGSEFKNIFGTPEFVAPEIVNYEPLGLEADMWSIG). Thr-180 and Thr-225 each carry phosphothreonine. A Phosphothreonine; by autocatalysis modification is found at Thr-265. Position 265 is a phosphothreonine; by ROCK1 (Thr-265). Ser-304 is modified (phosphoserine; by DAPK1). The residue at position 306 (Ser-306) is a Phosphoserine; by autocatalysis and DAPK1. Ser-307, Ser-313, and Ser-321 each carry phosphoserine; by DAPK1. The interaction with CDC5L stretch occupies residues 390 to 448 (AQEEARAALLGAGGLKRRLCRLENRYDALAAQVAAEVQFVRDLVRALEQERLQAECGVR). The required for interaction with ATF4 but not with PAWR stretch occupies residues 418 to 448 (LAAQVAAEVQFVRDLVRALEQERLQAECGVR). The segment at 422-436 (VAAEVQFVRDLVRAL) is leucine-zipper.

This sequence belongs to the protein kinase superfamily. CAMK Ser/Thr protein kinase family. DAP kinase subfamily. In terms of assembly, homooligomer in its kinase-active form (homotrimers and homodimers are reported); monomeric in its kinase-inactive form. Homodimerization is required for activation segment autophosphorylation. Interacts with DAXX, ATF4, NLK, TCF7L2, UBE2D1, UBE2D2, UBE2D3 and CDC5L. Interacts with PAWR; also demonstrated in aorta smooth muscle cells indicative for the cytoskeletal targeting function of PAWR. Interacts with AR; enhanced by AATF. Interacts with LUZP1; the interaction is likely to occur throughout the cell cycle and reduces the LUZP1-mediated suppression of MYL9 phosphorylation. Mg(2+) serves as cofactor. Ubiquitinated. Ubiquitination mediated by the UBE2D3 E3 ligase does not lead to proteasomal degradation, but influences promyelocytic leukemia protein nuclear bodies (PML-NBs) formation in the nucleus. Post-translationally, the phosphorylation status is critical for kinase activity, oligomerization and intracellular localization. Phosphorylation at Thr-180, Thr-225 and Thr-265 is essential for activity. The phosphorylated form is localized in the cytoplasm and nuclear translocation or retention is maximal when it is not phosphorylated. Phosphorylation increases the trimeric form, and its dephosphorylation favors a kinase-inactive monomeric form. As to expression, ubiquitously expressed in all tissue types examined. High levels in brain, heart, lung and spleen, lower expression in kidney, liver, skeletal muscle and testis. Isoform 2 is expressed in the smooth muscle.

The protein resides in the nucleus. It is found in the PML body. It localises to the cytoplasm. The protein localises to the cytoskeleton. Its subcellular location is the microtubule organizing center. The protein resides in the chromosome. It is found in the centromere. It localises to the spindle. The protein localises to the midbody. The enzyme catalyses L-seryl-[protein] + ATP = O-phospho-L-seryl-[protein] + ADP + H(+). It catalyses the reaction L-threonyl-[protein] + ATP = O-phospho-L-threonyl-[protein] + ADP + H(+). A sequential activation is proposed: autophosphorylation at consensus sites is leading to dimerization of the catalytic domain and activation segment exchange (producing an active confirmation of both kinase modules in trans) followed by phosphorylation at Thr-180 in the activation segment and at other regulatory sites. Phosphorylation at Thr-180, Thr-225 and Thr-265 is essential for activity. Inhibited by pyridone 6 (K00225), a potent, ATP-competitive inhibitor. Phosphorylation at Thr-180, Thr-225 and Thr-265 is essential for activity. Functionally, serine/threonine kinase which is involved in the regulation of apoptosis, autophagy, transcription, translation and actin cytoskeleton reorganization. Regulates both type I (caspase-dependent) apoptotic and type II (caspase-independent) autophagic cell deaths signal, depending on the cellular setting. Involved in formation of promyelocytic leukemia protein nuclear body (PML-NB). Involved in apoptosis involving PAWR which mediates cytoplasmic relocation; in vitro phosphorylates PAWR. Regulates myosin phosphorylation in both smooth muscle and non-muscle cells. In smooth muscle, regulates myosin either directly by phosphorylating MYL12B and MYL9 or through inhibition of smooth muscle myosin phosphatase (SMPP1M) via phosphorylation of PPP1R12A; the inhibition of SMPP1M functions to enhance muscle responsiveness to Ca(2+) and promote a contractile state. Phosphorylates MYL12B in non-muscle cells leading to reorganization of actin cytoskeleton such as in regulation of cell polarity and cell migration. Positively regulates canonical Wnt/beta-catenin signaling through interaction with NLK and TCF7L2; disrupts the NLK-TCF7L2 complex thereby influencing the phosphorylation of TCF7L2 by NLK. Phosphorylates RPL13A on 'Ser-77' upon interferon-gamma activation which is causing RPL13A release from the ribosome, RPL13A association with the GAIT complex and its subsequent involvement in transcript-selective translation inhibition. Phosphorylates STAT3 and enhances its transcriptional activity. Enhances transcription from AR-responsive promoters in a hormone- and kinase-dependent manner. Phosphorylates histone H3 on 'Thr-11' at centromeres during mitosis. The sequence is that of Death-associated protein kinase 3 (Dapk3) from Rattus norvegicus (Rat).